The following is a 1104-amino-acid chain: Protein KIBRA (1104 aa).

WW domains are found at residues 6–39 (LPLP…DPRD) and 53–86 (DELP…DPRV). Residues 107-193 (LSAQKEIYQV…ELQFKERGFQ (87 aa)) adopt a coiled-coil conformation. Serine 141 is modified (phosphoserine). Disordered regions lie at residues 429–449 (SMQS…RGSL) and 509–547 (TQKA…SPPC). Over residues 527-542 (TPRSMTSLSPRSSLSS) the composition is skewed to low complexity. The residue at position 535 (serine 535) is a Phosphoserine. The residue at position 542 (serine 542) is a Phosphoserine; by CDK1. The region spanning 659-782 (GATRVQIALK…RSGERSTRWY (124 aa)) is the C2 domain. The interval 822–949 (LEKRQEGRSS…DSSTLSKKPP (128 aa)) is disordered. The interval 836-1104 (EGSWTYEEEA…NIPALSADDV (269 aa)) is interaction with histone H3. Acidic residues predominate over residues 841–862 (YEEEASENEAVAEEEEEGEEDV). Serine 887, serine 891, and serine 919 each carry phosphoserine. Positions 916-930 (IIRSKTFSPGPQSQY) are enriched in polar residues. Phosphothreonine is present on threonine 921. The residue at position 923 (serine 923) is a Phosphoserine; by CDK1. A Phosphoserine modification is found at serine 939. 2 interaction with PRKCZ regions span residues 945 to 988 (SKKP…LDLQ) and 948 to 967 (PPFV…RPSS). Phosphoserine; by PKC/PRKCZ occurs at positions 967 and 970. A coiled-coil region spans residues 994–1024 (HSQLTQEISVLKELKEHLEQAKNHGEKELPQ). Residues 1102 to 1104 (DDV) carry the ADDV motif motif.

Belongs to the WWC family. KIBRA subfamily. Homodimer. Forms heterodimers with WWC2 and WWC3. Interacts with DDN. Interacts with DYNLL1 and histone H3. The interaction with DYNLL1 is mandatory for the recruitment and transactivation functions of ESR1 or DYNLL1 to the target chromatin and the interaction with histone H3 ensures proper regulatory interaction of WWC1-DYNLL1-ESR1 complexes with target chromatin. Interacts (via WW domains) with DDR1 (via PPxY motif) in a collagen-regulated manner. Interacts with PRKCZ (via the protein kinase domain). Forms a tripartite complex with DDR1 and PRKCZ, but predominantly in the absence of collagen. Interacts (via the ADDV motif) with PATJ (via PDZ domain 8). Interacts (via WW domains) with SYNPO (via PPxY motifs). Interacts with NF2 and SNX4. Interacts with CCDC141; retains AMPAR in the cytosol after internalization. Interacts with DLC1 and PRKCZ. Interacts (via WW domains) with LATS1 and LATS2. Post-translationally, phosphorylation at Ser-542 and Ser-923 by CDK1 in response to spindle damage stress regulates mitotic exit, these two sites are dephosphorylated by CDC14B. Mammary epithelium.

It localises to the cytoplasm. The protein resides in the perinuclear region. Its subcellular location is the nucleus. The protein localises to the cell projection. It is found in the ruffle membrane. It localises to the cytosol. In terms of biological role, regulator of the Hippo signaling pathway, also known as the Salvador-Warts-Hippo (SWH) pathway. Enhances phosphorylation of LATS1 and YAP1 and negatively regulates cell proliferation and organ growth due to a suppression of the transcriptional activity of YAP1, the major effector of the Hippo pathway. Along with NF2 can synergistically induce the phosphorylation of LATS1 and LATS2 and function in the regulation of Hippo signaling pathway. Acts as a transcriptional coactivator of ESR1 which plays an essential role in DYNLL1-mediated ESR1 transactivation. Modulates directional migration of podocytes. May be associated with memory performance. Regulates collagen-stimulated activation of the ERK/MAPK cascade. Plays an important role in regulating AMPA-selective glutamate receptors (AMPARs) trafficking. In Mus musculus (Mouse), this protein is Protein KIBRA (Wwc1).